The following is a 735-amino-acid chain: 5-methyltetrahydropteroyltriglutamate--homocysteine methyltransferase (735 aa).

Residues Arg15–Lys18 and Lys104 contribute to the 5-methyltetrahydropteroyltri-L-glutamate site. L-homocysteine is bound by residues Ile409 to Ser411 and Glu462. L-methionine-binding positions include Ile409 to Ser411 and Glu462. Residues Arg493–Cys494 and Trp539 contribute to the 5-methyltetrahydropteroyltri-L-glutamate site. Position 577 (Asp577) interacts with L-homocysteine. Residue Asp577 participates in L-methionine binding. Residue Glu583 coordinates 5-methyltetrahydropteroyltri-L-glutamate. Zn(2+)-binding residues include His618, Cys620, and Glu642. The active-site Proton donor is His672. Cys704 provides a ligand contact to Zn(2+).

This sequence belongs to the vitamin-B12 independent methionine synthase family. Requires Zn(2+) as cofactor.

The enzyme catalyses 5-methyltetrahydropteroyltri-L-glutamate + L-homocysteine = tetrahydropteroyltri-L-glutamate + L-methionine. It participates in amino-acid biosynthesis; L-methionine biosynthesis via de novo pathway; L-methionine from L-homocysteine (MetE route): step 1/1. Functionally, catalyzes the transfer of a methyl group from 5-methyltetrahydrofolate to homocysteine resulting in methionine formation. The protein is 5-methyltetrahydropteroyltriglutamate--homocysteine methyltransferase of Thermotoga petrophila (strain ATCC BAA-488 / DSM 13995 / JCM 10881 / RKU-1).